Here is a 170-residue protein sequence, read N- to C-terminus: Peptidyl-prolyl cis-trans isomerase-like 3 (170 aa).

Positions 1 to 160 (MSVTLHTDLG…QEFRIKSVTI (160 aa)) constitute a PPIase cyclophilin-type domain.

The protein belongs to the cyclophilin-type PPIase family. PPIL3 subfamily.

It catalyses the reaction [protein]-peptidylproline (omega=180) = [protein]-peptidylproline (omega=0). In terms of biological role, PPIases accelerate the folding of proteins. It catalyzes the cis-trans isomerization of proline imidic peptide bonds in oligopeptides. This chain is Peptidyl-prolyl cis-trans isomerase-like 3 (cyp4), found in Rhizopus delemar (strain RA 99-880 / ATCC MYA-4621 / FGSC 9543 / NRRL 43880) (Mucormycosis agent).